The sequence spans 401 residues: UPF0283 membrane protein SO_1811 (401 aa).

A disordered region spans residues 1–22; sequence MSVELLPHSTEPHANGADKSVS. 3 helical membrane-spanning segments follow: residues 99–119, 129–149, and 239–259; these read LARLSLMALLLLTLVQTVLGL, LFSFYGAVLGIVGSWAIVGVI, and ESAVLLAASPLAVLDMAIILW.

This sequence belongs to the UPF0283 family.

Its subcellular location is the cell inner membrane. This is UPF0283 membrane protein SO_1811 from Shewanella oneidensis (strain ATCC 700550 / JCM 31522 / CIP 106686 / LMG 19005 / NCIMB 14063 / MR-1).